The chain runs to 203 residues: A-type ATP synthase subunit E (203 aa).

The protein belongs to the V-ATPase E subunit family. Has multiple subunits with at least A(3), B(3), C, D, E, F, H, I and proteolipid K(x).

The protein localises to the cell membrane. Functionally, component of the A-type ATP synthase that produces ATP from ADP in the presence of a proton gradient across the membrane. This chain is A-type ATP synthase subunit E, found in Methanococcus maripaludis (strain DSM 14266 / JCM 13030 / NBRC 101832 / S2 / LL).